The chain runs to 262 residues: Indole-3-glycerol phosphate synthase (262 aa).

This sequence belongs to the TrpC family.

It catalyses the reaction 1-(2-carboxyphenylamino)-1-deoxy-D-ribulose 5-phosphate + H(+) = (1S,2R)-1-C-(indol-3-yl)glycerol 3-phosphate + CO2 + H2O. Its pathway is amino-acid biosynthesis; L-tryptophan biosynthesis; L-tryptophan from chorismate: step 4/5. The protein is Indole-3-glycerol phosphate synthase of Bordetella avium (strain 197N).